The sequence spans 436 residues: Citrate synthase (436 aa).

Catalysis depends on residues histidine 311 and aspartate 370.

The protein belongs to the citrate synthase family.

The catalysed reaction is oxaloacetate + acetyl-CoA + H2O = citrate + CoA + H(+). Its pathway is carbohydrate metabolism; tricarboxylic acid cycle; isocitrate from oxaloacetate: step 1/2. This chain is Citrate synthase (gltA), found in Rickettsia typhi (strain ATCC VR-144 / Wilmington).